The sequence spans 29 residues: Cytochrome b6-f complex subunit 8 (29 aa).

Residues 3–23 (IITFGWVAVAAFFALSIAFVV) form a helical membrane-spanning segment.

This sequence belongs to the PetN family. As to quaternary structure, the 4 large subunits of the cytochrome b6-f complex are cytochrome b6, subunit IV (17 kDa polypeptide, PetD), cytochrome f and the Rieske protein, while the 4 small subunits are PetG, PetL, PetM and PetN. The complex functions as a dimer.

The protein localises to the cellular thylakoid membrane. Its function is as follows. Component of the cytochrome b6-f complex, which mediates electron transfer between photosystem II (PSII) and photosystem I (PSI), cyclic electron flow around PSI, and state transitions. The sequence is that of Cytochrome b6-f complex subunit 8 from Synechococcus sp. (strain JA-3-3Ab) (Cyanobacteria bacterium Yellowstone A-Prime).